Reading from the N-terminus, the 222-residue chain is Superoxide dismutase [Mn], mitochondrial (222 aa).

The N-terminal 24 residues, 1 to 24 (MLSRGVCGTSRQLAPALGYLGSRQ), are a transit peptide targeting the mitochondrion. Residue H50 participates in Mn(2+) binding. Y58 carries the post-translational modification 3'-nitrotyrosine. 2 positions are modified to N6-acetyllysine; alternate: K68 and K75. Residues K68 and K75 each carry the N6-succinyllysine; alternate modification. Position 98 (H98) interacts with Mn(2+). N6-acetyllysine is present on K114. 2 positions are modified to N6-acetyllysine; alternate: K122 and K130. K122 and K130 each carry N6-succinyllysine; alternate. Residues D183 and H187 each contribute to the Mn(2+) site. K202 bears the N6-acetyllysine mark.

Belongs to the iron/manganese superoxide dismutase family. Homotetramer. Mn(2+) is required as a cofactor. Nitrated under oxidative stress. Nitration coupled with oxidation inhibits the catalytic activity. In terms of processing, acetylation at Lys-122 decreases enzymatic activity. Deacetylated by SIRT3 upon exposure to ionizing radiations or after long fasting. Post-translationally, polyubiquitinated; leading to proteasomal degradation. Deubiquitinated by USP36 which increases protein stability.

The protein resides in the mitochondrion matrix. The catalysed reaction is 2 superoxide + 2 H(+) = H2O2 + O2. Functionally, destroys superoxide anion radicals which are normally produced within the cells and which are toxic to biological systems. This Pongo pygmaeus (Bornean orangutan) protein is Superoxide dismutase [Mn], mitochondrial (SOD2).